The primary structure comprises 325 residues: GMP reductase (325 aa).

Cysteine 173 acts as the Thioimidate intermediate in catalysis. 202–225 is a binding site for NADP(+); the sequence is IIADGGIRSHGDIAKSVRFGATMV.

This sequence belongs to the IMPDH/GMPR family. GuaC type 2 subfamily.

The enzyme catalyses IMP + NH4(+) + NADP(+) = GMP + NADPH + 2 H(+). In terms of biological role, catalyzes the irreversible NADPH-dependent deamination of GMP to IMP. It functions in the conversion of nucleobase, nucleoside and nucleotide derivatives of G to A nucleotides, and in maintaining the intracellular balance of A and G nucleotides. This Delftia acidovorans (strain DSM 14801 / SPH-1) protein is GMP reductase.